Reading from the N-terminus, the 367-residue chain is UDP-D-xylose:L-fucose alpha-1,3-D-xylosyltransferase (367 aa).

Polar residues predominate over residues methionine 1–glutamine 10. Residues methionine 1–tyrosine 21 are disordered. Residues methionine 1–asparagine 35 are Cytoplasmic-facing. Over residues arginine 12–tyrosine 21 the composition is skewed to low complexity. A helical; Signal-anchor for type II membrane protein membrane pass occupies residues glycine 36 to glycine 56. Residues serine 57 to glutamine 367 lie on the Lumenal side of the membrane. 3 N-linked (GlcNAc...) asparagine glycosylation sites follow: asparagine 85, asparagine 98, and asparagine 173. A DXD motif motif is present at residues aspartate 196–aspartate 198. N-linked (GlcNAc...) asparagine glycans are attached at residues asparagine 228 and asparagine 292.

This sequence belongs to the glycosyltransferase 77 family. The cofactor is Mn(2+). Requires Mg(2+) as cofactor. Glycosylated. In terms of tissue distribution, expressed in roots, rosette leaves, stems and flowers.

It is found in the golgi apparatus membrane. Its function is as follows. Catalyzes the transfer of D-xylose from UDP-alpha-D-xylose onto L-fucose. Probably involved in the biosynthesis of rhamnogalacturonan II (RG-II) through xylosylation of the internal fucose moiety of the A-chain of RG-II, a structurally complex pectic polysaccharide of the primary cell wall. RG-II is essential for the cell wall integrity of rapidly growing tissues such as roots and pollen tube growth and elongation. In Arabidopsis thaliana (Mouse-ear cress), this protein is UDP-D-xylose:L-fucose alpha-1,3-D-xylosyltransferase.